The primary structure comprises 292 residues: Large ribosomal subunit protein bL19m (292 aa).

The segment at 39–68 (GPGRRQITGPSEPGVFQPPPKPVIVDKRGP) is disordered. Position 77 is a phosphoserine (serine 77).

This sequence belongs to the bacterial ribosomal protein bL19 family. In terms of assembly, component of the mitochondrial ribosome large subunit (39S) which comprises a 16S rRNA and about 50 distinct proteins.

It localises to the mitochondrion. This is Large ribosomal subunit protein bL19m (MRPL19) from Bos taurus (Bovine).